Reading from the N-terminus, the 593-residue chain is NADH-quinone oxidoreductase subunit C/D (593 aa).

An NADH dehydrogenase I subunit C region spans residues 1–184 (MTADNAIFIP…DPYSLTLAKQ (184 aa)). Residues 208–593 (DYMFLNLGPN…IDFVMADVDR (386 aa)) form an NADH dehydrogenase I subunit D region.

In the N-terminal section; belongs to the complex I 30 kDa subunit family. It in the C-terminal section; belongs to the complex I 49 kDa subunit family. NDH-1 is composed of 13 different subunits. Subunits NuoB, CD, E, F, and G constitute the peripheral sector of the complex.

The protein localises to the cell inner membrane. It catalyses the reaction a quinone + NADH + 5 H(+)(in) = a quinol + NAD(+) + 4 H(+)(out). In terms of biological role, NDH-1 shuttles electrons from NADH, via FMN and iron-sulfur (Fe-S) centers, to quinones in the respiratory chain. The immediate electron acceptor for the enzyme in this species is believed to be ubiquinone. Couples the redox reaction to proton translocation (for every two electrons transferred, four hydrogen ions are translocated across the cytoplasmic membrane), and thus conserves the redox energy in a proton gradient. The chain is NADH-quinone oxidoreductase subunit C/D from Pseudomonas putida (strain ATCC 700007 / DSM 6899 / JCM 31910 / BCRC 17059 / LMG 24140 / F1).